Consider the following 301-residue polypeptide: Nitric oxide synthase-interacting protein (301 aa).

S36 is subject to Phosphoserine. The interval 55–75 is U-box-like; that stretch reads DPVVTPDGYLYEREAILEYIL. The short motif at 78–101 is the Nuclear localization signal element; the sequence is KKEIARQMKAYEKQRGTRREEQKE. At S107 the chain carries Phosphoserine. The disordered stretch occupies residues 132-157; it reads KALSGTSPDDVQPGPSVGPPSKDKDK.

It belongs to the NOSIP family. In terms of assembly, interacts with NOS1 and NOS3. Interacts with PP2A holoenzyme, containing PPP2CA, PPP2CB, PPP2R1A and PPP2R2A subunits. As to expression, expressed in heart, brain and lung. Present in endothelial cells (at protein level).

The protein localises to the cytoplasm. It localises to the nucleus. It carries out the reaction S-ubiquitinyl-[E2 ubiquitin-conjugating enzyme]-L-cysteine + [acceptor protein]-L-lysine = [E2 ubiquitin-conjugating enzyme]-L-cysteine + N(6)-ubiquitinyl-[acceptor protein]-L-lysine.. Functionally, E3 ubiquitin-protein ligase that is essential for proper development of the forebrain, the eye, and the face. Catalyzes monoubiquitination of serine/threonine-protein phosphatase 2A (PP2A) catalytic subunit PPP2CA/PPP2CB. Negatively regulates nitric oxide production by inducing NOS1 and NOS3 translocation to actin cytoskeleton and inhibiting their enzymatic activity. In Homo sapiens (Human), this protein is Nitric oxide synthase-interacting protein (NOSIP).